Reading from the N-terminus, the 1389-residue chain is uncharacterized protein (1389 aa).

Residues 43–94 adopt a coiled-coil conformation; it reads STIAQRVSQLENEVAEINVALAEHVNELNSQEKRIDKLEKTVKKKKSNCSDD. The segment at 294-353 is disordered; the sequence is HKNRRSKSDNSDLSEYSSSNSDDSECTDSDGSSCSTDGSPDCTESENTESHRSHGKKKHR. Composition is skewed to low complexity over residues 304 to 314 and 322 to 335; these read SDLSEYSSSNS and SDGSSCSTDGSPDC. WD repeat units lie at residues 867–907, 1017–1056, and 1115–1156; these read TFTD…VKHI, GYNEGLDIKYSPDQTIVVSGYYNTNPLIIYDGPDGLTPSG, and GISN…ILST.

The protein resides in the virion. This is an uncharacterized protein from Acanthamoeba polyphaga (Amoeba).